The following is a 951-amino-acid chain: Protein inturned (951 aa).

Disordered regions lie at residues 1–32 (MEHSRGDSVEAGEEEEGRGGWDSRSAGTFSSS), 189–208 (SSRNSKRSERQGRQESNQRL), and 687–765 (TPKR…GGSG). The PDZ domain occupies 187–269 (HQSSRNSKRS…PMQLKLTFET (83 aa)). A compositionally biased stretch (low complexity) spans 715 to 726 (PTRSSGGSDSGT). Basic and acidic residues predominate over residues 743-752 (MARKFGRRES). Over residues 754 to 765 (GSGGSDGSGGSG) the composition is skewed to gly residues.

This sequence belongs to the inturned family. As to quaternary structure, interacts with fuz and wdpcp; fuz, intu and wdpcp probably form the core CPLANE (ciliogenesis and planar polarity effectors) complex. Expressed in the neural plate during neural tube closure with subsequent strong expression in the ventral neural tube and in facial mesenchyme.

It is found in the cell surface. Its subcellular location is the cell membrane. It localises to the cytoplasm. The protein resides in the cytoskeleton. The protein localises to the cilium basal body. Functionally, plays a role in the definition of cell polarity via the planar cell polarity (PCP) cascade. Required for ciliogenesis by controlling the organization of the apical actin cytoskeleton and the positioning of the basal bodies at the apical cell surface, which in turn is essential for the normal orientation of elongating ciliary microtubules. Proposed to function as core component of a functional module called CPLANE (ciliogenesis and planar polarity effectors) involved in recruitment of peripheral IFT-A proteins to basal bodies. Controls the localization of both rhoa and disheveled in multi-ciliated cells. Has an indirect effect on hedgehog signaling. The chain is Protein inturned from Xenopus laevis (African clawed frog).